A 2185-amino-acid polypeptide reads, in one-letter code: DNA polymerase epsilon catalytic subunit A (2185 aa).

Cys-2072, Cys-2075, Cys-2094, and Cys-2097 together coordinate Zn(2+). The segment at Cys-2072–Cys-2097 adopts a CysA-type zinc-finger fold. 4 residues coordinate [4Fe-4S] cluster: Cys-2128, Cys-2131, Cys-2143, and Cys-2145. The CysB motif signature appears at Cys-2128–Cys-2145.

The protein belongs to the DNA polymerase type-B family. As to quaternary structure, heterotetramer. Consists of 4 subunits: POL2, DPB2, DPB3 and DPB4. It depends on [4Fe-4S] cluster as a cofactor.

The protein resides in the nucleus. The catalysed reaction is DNA(n) + a 2'-deoxyribonucleoside 5'-triphosphate = DNA(n+1) + diphosphate. DNA polymerase II participates in chromosomal DNA replication. The protein is DNA polymerase epsilon catalytic subunit A (POL2) of Kluyveromyces lactis (strain ATCC 8585 / CBS 2359 / DSM 70799 / NBRC 1267 / NRRL Y-1140 / WM37) (Yeast).